The primary structure comprises 157 residues: RNA pyrophosphohydrolase (157 aa).

Residues 6 to 149 (SYRPNVAAVI…KRKVYRRVID (144 aa)) enclose the Nudix hydrolase domain. The Nudix box motif lies at 43–64 (GGIDEGETPEDALYRELLEEIG).

Belongs to the Nudix hydrolase family. RppH subfamily. Requires a divalent metal cation as cofactor.

Functionally, accelerates the degradation of transcripts by removing pyrophosphate from the 5'-end of triphosphorylated RNA, leading to a more labile monophosphorylated state that can stimulate subsequent ribonuclease cleavage. The polypeptide is RNA pyrophosphohydrolase (Sulfurovum sp. (strain NBC37-1)).